Reading from the N-terminus, the 337-residue chain is MSDFKAILAKLADGKSLSRDEAVAAFDHLMSGEATPSQIGGALMAMRVRGETVDEITGAVSTMRAKMLRVTAPDDAVDVVGTGGDGSGSVNVSTCAAFIVAGAGVPVAKHGNRAMSSKSGAADVLASLGVNIELTPEQVGACIAKAGIGFMFAPAHHPAIRHVGPTRKELGTRTIFNLLGPLSNPAGVKRQMIGVFAKHWVEPVAQVLKNLGATAAWVVHGSDGLDEITLTGPTYVTELANGVTRSFTVTPEDGGLATVANADLRGGDATANAAALAAVLNGVKNDYRDVALLNAGAALVVAGKAHDLKEGVALGIKSLDSGAAADKLAQLVAVSRA.

5-phospho-alpha-D-ribose 1-diphosphate is bound by residues Gly-81, 84-85 (GD), Ser-89, 91-94 (NVST), 109-117 (KHGNRAMSS), and Ala-121. Gly-81 is a binding site for anthranilate. Ser-93 provides a ligand contact to Mg(2+). Asn-112 is an anthranilate binding site. Arg-167 provides a ligand contact to anthranilate. Residues Asp-226 and Glu-227 each contribute to the Mg(2+) site.

Belongs to the anthranilate phosphoribosyltransferase family. In terms of assembly, homodimer. Mg(2+) is required as a cofactor.

The enzyme catalyses N-(5-phospho-beta-D-ribosyl)anthranilate + diphosphate = 5-phospho-alpha-D-ribose 1-diphosphate + anthranilate. Its pathway is amino-acid biosynthesis; L-tryptophan biosynthesis; L-tryptophan from chorismate: step 2/5. Catalyzes the transfer of the phosphoribosyl group of 5-phosphorylribose-1-pyrophosphate (PRPP) to anthranilate to yield N-(5'-phosphoribosyl)-anthranilate (PRA). The sequence is that of Anthranilate phosphoribosyltransferase from Afipia carboxidovorans (strain ATCC 49405 / DSM 1227 / KCTC 32145 / OM5) (Oligotropha carboxidovorans).